Consider the following 186-residue polypeptide: ATP synthase subunit b (186 aa).

The helical transmembrane segment at 28–48 threads the bilayer; that stretch reads IVWSIIPFAVILFVFAKVVLP.

It belongs to the ATPase B chain family. As to quaternary structure, F-type ATPases have 2 components, F(1) - the catalytic core - and F(0) - the membrane proton channel. F(1) has five subunits: alpha(3), beta(3), gamma(1), delta(1), epsilon(1). F(0) has three main subunits: a(1), b(2) and c(10-14). The alpha and beta chains form an alternating ring which encloses part of the gamma chain. F(1) is attached to F(0) by a central stalk formed by the gamma and epsilon chains, while a peripheral stalk is formed by the delta and b chains.

The protein localises to the cell membrane. Its function is as follows. F(1)F(0) ATP synthase produces ATP from ADP in the presence of a proton or sodium gradient. F-type ATPases consist of two structural domains, F(1) containing the extramembraneous catalytic core and F(0) containing the membrane proton channel, linked together by a central stalk and a peripheral stalk. During catalysis, ATP synthesis in the catalytic domain of F(1) is coupled via a rotary mechanism of the central stalk subunits to proton translocation. Functionally, component of the F(0) channel, it forms part of the peripheral stalk, linking F(1) to F(0). The polypeptide is ATP synthase subunit b (Corynebacterium urealyticum (strain ATCC 43042 / DSM 7109)).